Consider the following 609-residue polypeptide: Threonine--tRNA ligase (609 aa).

Residues 1–143 form an editing domain region; sequence MRVLYIHAER…SFKPEGAKVE (143 aa). Catalytic regions lie at residues 195 to 491 and 196 to 491; these read PRYL…PRLP and RYLD…PRLP. Residues Cys288, His339, and His460 each coordinate Zn(2+).

The protein belongs to the class-II aminoacyl-tRNA synthetase family. As to quaternary structure, homodimer. The cofactor is Zn(2+).

It localises to the cytoplasm. The catalysed reaction is tRNA(Thr) + L-threonine + ATP = L-threonyl-tRNA(Thr) + AMP + diphosphate + H(+). Its function is as follows. Catalyzes the attachment of threonine to tRNA(Thr) in a two-step reaction: L-threonine is first activated by ATP to form Thr-AMP and then transferred to the acceptor end of tRNA(Thr). Also edits incorrectly charged L-seryl-tRNA(Thr). The polypeptide is Threonine--tRNA ligase (Pyrobaculum islandicum (strain DSM 4184 / JCM 9189 / GEO3)).